The sequence spans 103 residues: Large ribosomal subunit protein bL21 (103 aa).

This sequence belongs to the bacterial ribosomal protein bL21 family. In terms of assembly, part of the 50S ribosomal subunit. Contacts protein L20.

Functionally, this protein binds to 23S rRNA in the presence of protein L20. In Azoarcus sp. (strain BH72), this protein is Large ribosomal subunit protein bL21.